A 1036-amino-acid polypeptide reads, in one-letter code: Hexagonally packed intermediate-layer surface protein (1036 aa).

The signal sequence occupies residues 1 to 17; it reads MKKNIALMALTGVLTLA. 3 cysteine pairs are disulfide-bonded: cysteine 74/cysteine 86, cysteine 256/cysteine 275, and cysteine 642/cysteine 754.

In terms of processing, glycosylated; contains six glycans. Acylated in the N-terminal region. Post-translationally, the N-terminus is blocked.

Its subcellular location is the secreted. It localises to the cell wall. The protein localises to the S-layer. Functionally, shape maintenance, possible protection from noxious enzymes or exogenous and unsettling DNA, and may mediate homotypic cell-cell contacts. The protein is Hexagonally packed intermediate-layer surface protein (hpi) of Deinococcus radiodurans.